The primary structure comprises 205 residues: Guanylate kinase (205 aa).

In terms of domain architecture, Guanylate kinase-like spans 7–185 (GNIFIISAAS…AEEDLRHIVN (179 aa)). ATP is bound at residue 14-21 (AASGTGKT).

It belongs to the guanylate kinase family.

It is found in the cytoplasm. The catalysed reaction is GMP + ATP = GDP + ADP. Its function is as follows. Essential for recycling GMP and indirectly, cGMP. This is Guanylate kinase (gmk) from Neisseria meningitidis serogroup B (strain ATCC BAA-335 / MC58).